Consider the following 236-residue polypeptide: 2,3,4,5-tetrahydropyridine-2,6-dicarboxylate N-acetyltransferase (236 aa).

The protein belongs to the transferase hexapeptide repeat family. DapH subfamily.

The enzyme catalyses (S)-2,3,4,5-tetrahydrodipicolinate + acetyl-CoA + H2O = L-2-acetamido-6-oxoheptanedioate + CoA. It functions in the pathway amino-acid biosynthesis; L-lysine biosynthesis via DAP pathway; LL-2,6-diaminopimelate from (S)-tetrahydrodipicolinate (acetylase route): step 1/3. Catalyzes the transfer of an acetyl group from acetyl-CoA to tetrahydrodipicolinate. The polypeptide is 2,3,4,5-tetrahydropyridine-2,6-dicarboxylate N-acetyltransferase (Limosilactobacillus reuteri (strain DSM 20016) (Lactobacillus reuteri)).